We begin with the raw amino-acid sequence, 458 residues long: uncharacterized protein (458 aa).

The protein belongs to the glycerate kinase type-2 family.

This is an uncharacterized protein from Caenorhabditis elegans.